A 100-amino-acid polypeptide reads, in one-letter code: Aspartyl/glutamyl-tRNA(Asn/Gln) amidotransferase subunit C (100 aa).

This sequence belongs to the GatC family. In terms of assembly, heterotrimer of A, B and C subunits.

The catalysed reaction is L-glutamyl-tRNA(Gln) + L-glutamine + ATP + H2O = L-glutaminyl-tRNA(Gln) + L-glutamate + ADP + phosphate + H(+). It carries out the reaction L-aspartyl-tRNA(Asn) + L-glutamine + ATP + H2O = L-asparaginyl-tRNA(Asn) + L-glutamate + ADP + phosphate + 2 H(+). Functionally, allows the formation of correctly charged Asn-tRNA(Asn) or Gln-tRNA(Gln) through the transamidation of misacylated Asp-tRNA(Asn) or Glu-tRNA(Gln) in organisms which lack either or both of asparaginyl-tRNA or glutaminyl-tRNA synthetases. The reaction takes place in the presence of glutamine and ATP through an activated phospho-Asp-tRNA(Asn) or phospho-Glu-tRNA(Gln). The protein is Aspartyl/glutamyl-tRNA(Asn/Gln) amidotransferase subunit C of Streptococcus suis (strain 98HAH33).